A 295-amino-acid chain; its full sequence is Acetylglutamate kinase (295 aa).

Substrate contacts are provided by residues 64–65 (GG), arginine 86, and asparagine 190.

This sequence belongs to the acetylglutamate kinase family. ArgB subfamily.

The protein resides in the cytoplasm. The enzyme catalyses N-acetyl-L-glutamate + ATP = N-acetyl-L-glutamyl 5-phosphate + ADP. Its pathway is amino-acid biosynthesis; L-arginine biosynthesis; N(2)-acetyl-L-ornithine from L-glutamate: step 2/4. Catalyzes the ATP-dependent phosphorylation of N-acetyl-L-glutamate. The sequence is that of Acetylglutamate kinase from Heliobacterium modesticaldum (strain ATCC 51547 / Ice1).